The following is a 327-amino-acid chain: MARLSPLHLRVQCAIRQQQLLHPGQRLLVAFSGGQDSFCLLQILRDLQPRWGWQIFVLHCDHRWSADETECARFLQGWLQQQGLPHAVETADPIRRDEAGARAWRYQQLEKWARTWDCSAVVMGHTASDRAETFLWNLLRGTGAAGLSSLDWQRHLDDRDPTSAQVVRPLLGLYRWETEQFCQQHQLPVWPDRSNQDLAHGRNRLRLEVMPYLKQHFNPQLEAALNRAATLLQAEHELVVAQAAQLWPQVYEPALPGLRRDPLRAAPLALQRQVMFQFLSLVLPHHPTFEQVEAGIQLLKADRGSRSPDYPGGHWLEVKGDHLVCFH.

Residue Ser32 to Ser37 coordinates ATP.

It belongs to the tRNA(Ile)-lysidine synthase family.

It localises to the cytoplasm. The catalysed reaction is cytidine(34) in tRNA(Ile2) + L-lysine + ATP = lysidine(34) in tRNA(Ile2) + AMP + diphosphate + H(+). Ligates lysine onto the cytidine present at position 34 of the AUA codon-specific tRNA(Ile) that contains the anticodon CAU, in an ATP-dependent manner. Cytidine is converted to lysidine, thus changing the amino acid specificity of the tRNA from methionine to isoleucine. This chain is tRNA(Ile)-lysidine synthase, found in Synechococcus sp. (strain JA-2-3B'a(2-13)) (Cyanobacteria bacterium Yellowstone B-Prime).